Here is a 160-residue protein sequence, read N- to C-terminus: S-ribosylhomocysteine lyase (160 aa).

Histidine 57, histidine 61, and cysteine 127 together coordinate Fe cation.

It belongs to the LuxS family. As to quaternary structure, homodimer. It depends on Fe cation as a cofactor.

The catalysed reaction is S-(5-deoxy-D-ribos-5-yl)-L-homocysteine = (S)-4,5-dihydroxypentane-2,3-dione + L-homocysteine. Its function is as follows. Involved in the synthesis of autoinducer 2 (AI-2) which is secreted by bacteria and is used to communicate both the cell density and the metabolic potential of the environment. The regulation of gene expression in response to changes in cell density is called quorum sensing. Catalyzes the transformation of S-ribosylhomocysteine (RHC) to homocysteine (HC) and 4,5-dihydroxy-2,3-pentadione (DPD). The polypeptide is S-ribosylhomocysteine lyase (Streptococcus mutans serotype c (strain ATCC 700610 / UA159)).